The primary structure comprises 565 residues: MLTGSSGKAFILSILQASPSARDSRSYLSSFAPPQPVDIATATPAATPSDGAQPPAQNPLVNALLNPILRRPALVKIQGPFTDAQLESICRGMAHLQKLGLVSVIVVDRDDLPSTESSDRYEAQRQRAIVRHEVERVVHFLSRHRAAARPVFSTVARIADPELEPEEAQKGVFVEEEGLDHVRRAVGEGEIPVLLPVALDSGCRSRRIPANRVLLALASAMSTHTSSPVDLTPRRLLVINREGGIPSYARQGLPHLYINLASEFSYINRTFQPQWNDSHPTALSNLFLANGCLAHMPREASALIVSHRSPAALIANLITNKPAHSASLPHALLVESEGRITRDTPTLIRKGLPVRVLRSMEEVDQDKLTHLLETSFKRTLDREGFYNRLKNDLDFVIVIGDYAGAAVCTLEGKPVSDSFAYPPNHPEPICYLDKFAVHPSHQGDGTVDFLWVALRDETYGLGQLDASNPSIGSLRGVGRGRDLVWRSRSDNPVNKWYYERSSGFLKTRDEKWKVFWCDAEQRLGEIWREREFGGGRLVRVVEKEEKGRVKWWEEVIGAIPSAWSA.

The interval 38–58 (DIATATPAATPSDGAQPPAQN) is disordered. Positions 352 to 540 (LPVRVLRSME…EFGGGRLVRV (189 aa)) constitute an N-acetyltransferase domain.

Belongs to the acetyltransferase family.

Its subcellular location is the mitochondrion. It carries out the reaction L-glutamate + acetyl-CoA = N-acetyl-L-glutamate + CoA + H(+). Its pathway is amino-acid biosynthesis; L-arginine biosynthesis; N(2)-acetyl-L-ornithine from L-glutamate: step 1/4. N-acetylglutamate synthase involved in arginine biosynthesis. The polypeptide is Amino-acid acetyltransferase, mitochondrial (ARG2) (Cryptococcus neoformans var. neoformans serotype D (strain B-3501A) (Filobasidiella neoformans)).